Reading from the N-terminus, the 976-residue chain is Villin-2 (976 aa).

6 Gelsolin-like repeats span residues 27 to 77 (FEAV…DEAG), 148 to 188 (IRLK…QERA), 260 to 302 (GKME…DERK), 399 to 450 (GKVK…EDQD), 531 to 571 (NKAV…EQLE), and 633 to 674 (FQVE…KEKQ). The tract at residues 769-917 (NSSSNRPAYS…SEIQPSGATF (149 aa)) is disordered. Residues 782–794 (RLNESHDGPRQRA) are compositionally biased toward basic and acidic residues. 3 stretches are compositionally biased toward low complexity: residues 795 to 812 (EALA…SSTK), 823 to 841 (SQAS…VLVA), and 848 to 858 (DTSPTRRSTSS). Serine 890 bears the Phosphoserine mark. Positions 908–917 (SEIQPSGATF) are enriched in polar residues. The HP domain occupies 911–976 (QPSGATFTYE…DLLKKKFDLF (66 aa)).

Belongs to the villin/gelsolin family. In terms of tissue distribution, expressed in all tissues examined. Mainly detected in the root epidermis and vasculature. Expressed in the root cap.

Its subcellular location is the cytoplasm. The protein resides in the cytoskeleton. Functionally, ca(2+)-regulated actin-binding protein. Involved in actin filaments bundling. Caps the barbed end of actin filaments and is able to sever them in a calcium-dependent manner. Required for the construction of actin collars in pollen tubes. Acts redundantly with VLN5 (AC Q9LVC6) to generate thick actin filament bundles and to regulate polarized pollen tube growth. Acts redundantly with VLN3 (AC O81645) to regulate directional organ growth and in sclerenchyma development. The polypeptide is Villin-2 (Arabidopsis thaliana (Mouse-ear cress)).